The primary structure comprises 168 residues: uncharacterized protein (168 aa).

The chain crosses the membrane as a helical span at residues 36–56 (LNWWQLIVVVGIAISGIAAIA). Residue Asn74 is glycosylated (N-linked (GlcNAc...) asparagine; by host). The next 3 membrane-spanning stretches (helical) occupy residues 86–106 (FIII…LAWL), 115–135 (KLLT…ALTI), and 143–163 (MVKL…GFFI). A glycan (N-linked (GlcNAc...) asparagine; by host) is linked at Asn164.

It is found in the membrane. This is an uncharacterized protein from Acanthamoeba polyphaga mimivirus (APMV).